The sequence spans 37 residues: Cytochrome b6-f complex subunit 5 (37 aa).

Residues 5-25 traverse the membrane as a helical segment; it reads LLFGIVLGLIPVTLTGLFVAA.

Belongs to the PetG family. In terms of assembly, the 4 large subunits of the cytochrome b6-f complex are cytochrome b6, subunit IV (17 kDa polypeptide, PetD), cytochrome f and the Rieske protein, while the 4 small subunits are PetG, PetL, PetM and PetN. The complex functions as a dimer.

It is found in the plastid. It localises to the chloroplast thylakoid membrane. In terms of biological role, component of the cytochrome b6-f complex, which mediates electron transfer between photosystem II (PSII) and photosystem I (PSI), cyclic electron flow around PSI, and state transitions. PetG is required for either the stability or assembly of the cytochrome b6-f complex. This chain is Cytochrome b6-f complex subunit 5, found in Guillardia theta (Cryptophyte).